Consider the following 127-residue polypeptide: Protein ApaG (127 aa).

The ApaG domain maps to 3–127 (EGKKYEIAVK…FILSVPRILH (125 aa)).

In Nitrosospira multiformis (strain ATCC 25196 / NCIMB 11849 / C 71), this protein is Protein ApaG.